Here is a 590-residue protein sequence, read N- to C-terminus: tRNA-guanine(15) transglycosylase (590 aa).

The Nucleophile role is filled by D90. D125 is a binding site for substrate. Residues C278, C280, and C283 each coordinate Zn(2+). The region spanning 502–577 is the PUA domain; it reads KGRVVVKGLF…HPFIIIRRHV (76 aa).

Belongs to the archaeosine tRNA-ribosyltransferase family. The cofactor is Zn(2+).

The catalysed reaction is guanosine(15) in tRNA + 7-cyano-7-deazaguanine = 7-cyano-7-carbaguanosine(15) in tRNA + guanine. The protein operates within tRNA modification; archaeosine-tRNA biosynthesis. Exchanges the guanine residue with 7-cyano-7-deazaguanine (preQ0) at position 15 in the dihydrouridine loop (D-loop) of archaeal tRNAs. The chain is tRNA-guanine(15) transglycosylase from Korarchaeum cryptofilum (strain OPF8).